A 294-amino-acid chain; its full sequence is Type I ribosome-inactivating protein trichoanguina (294 aa).

Residues 1-19 (MALSFFFLAISLGSPTAIG) form the signal peptide. N70 carries an N-linked (GlcNAc...) asparagine glycan. Active-site residues include E177 and R180. N-linked (GlcNAc...) asparagine glycosylation is present at N220. Residues 265–294 (VGSEYDIPTTILHPGAMGMLHNQNGNYVTM) constitute a propeptide that is removed on maturation.

The protein belongs to the ribosome-inactivating protein family. Type 1 RIP subfamily.

It catalyses the reaction Endohydrolysis of the N-glycosidic bond at one specific adenosine on the 28S rRNA.. Its function is as follows. Inhibits protein synthesis by depurinating 28S rRNA in ribosomes. In Trichosanthes anguina (Snake gourd), this protein is Type I ribosome-inactivating protein trichoanguina (TCA).